The chain runs to 252 residues: Small ribosomal subunit protein uS2 (252 aa).

The residue at position 2 (Ser-2) is an N-acetylserine. Residues Gln-213–Ala-222 show a composition bias toward low complexity. Positions Gln-213–Trp-252 are disordered. Positions Thr-223–Trp-252 are enriched in acidic residues.

This sequence belongs to the universal ribosomal protein uS2 family. Component of the small ribosomal subunit. Mature ribosomes consist of a small (40S) and a large (60S) subunit. The 40S subunit contains about 33 different proteins and 1 molecule of RNA (18S). The 60S subunit contains about 49 different proteins and 3 molecules of RNA (25S, 5.8S and 5S). Interacts with RPS21.

The protein resides in the cytoplasm. Required for the assembly and/or stability of the 40S ribosomal subunit. Required for the processing of the 20S rRNA-precursor to mature 18S rRNA in a late step of the maturation of 40S ribosomal subunits. The sequence is that of Small ribosomal subunit protein uS2 from Zygosaccharomyces rouxii (strain ATCC 2623 / CBS 732 / NBRC 1130 / NCYC 568 / NRRL Y-229).